The chain runs to 172 residues: Mitochondrial import inner membrane translocase subunit Tim17-B (172 aa).

A disulfide bond links Cys-9 and Cys-78. 3 consecutive transmembrane segments (helical) span residues 17–37 (CGGAFTMGVIGGGVFQAIKGF), 61–77 (QIGGSFAVWGGLFSTID), and 113–133 (VGSAMMGGILLALIEGVGILL). The disordered stretch occupies residues 146 to 172 (PFLEDPSQLPPKDGTPAPGYPSYQQYH).

This sequence belongs to the Tim17/Tim22/Tim23 family. Component of the TIM23 complex at least composed of TIMM23, TIMM17 (TIMM17A or TIMM17B) and TIMM50. The complex interacts with the TIMM44 component of the PAM complex and with DNAJC15. Forms one disulfide bond. As to expression, expression is abundant in heart and skeletal muscle, intermediate in brain, and weak in pancreas, placenta, kidney and liver.

Its subcellular location is the mitochondrion inner membrane. Functionally, essential component of the TIM23 complex, a complex that mediates the translocation of transit peptide-containing proteins across the mitochondrial inner membrane. The protein is Mitochondrial import inner membrane translocase subunit Tim17-B (TIMM17B) of Homo sapiens (Human).